Here is a 190-residue protein sequence, read N- to C-terminus: MPRANEIKKGMAVNLNGKLLLVKDIDVQSPSARGASTLYKMRFTDIRSGMKVEERFKGDEIIDTISLSRRQVTFSYIDGDEYVFMDDEDYTPYNFKREQIEDELLFLPEGGIPGIQVLTMDGQILALELPQTVDMEIVETTPGIKGASASARTKPAAMSTGLIIQVPEYLSNGDKIRIHIPERRYMSRAD.

This sequence belongs to the elongation factor P family.

The chain is Elongation factor P-like protein from Erwinia tasmaniensis (strain DSM 17950 / CFBP 7177 / CIP 109463 / NCPPB 4357 / Et1/99).